The primary structure comprises 223 residues: Adenine phosphoribosyltransferase (223 aa).

It belongs to the purine/pyrimidine phosphoribosyltransferase family. In terms of assembly, homodimer.

The protein localises to the cytoplasm. It catalyses the reaction AMP + diphosphate = 5-phospho-alpha-D-ribose 1-diphosphate + adenine. It participates in purine metabolism; AMP biosynthesis via salvage pathway; AMP from adenine: step 1/1. Functionally, catalyzes a salvage reaction resulting in the formation of AMP, that is energically less costly than de novo synthesis. In Mycobacterium bovis (strain ATCC BAA-935 / AF2122/97), this protein is Adenine phosphoribosyltransferase.